The primary structure comprises 276 residues: Formamidopyrimidine-DNA glycosylase (276 aa).

Pro-2 (schiff-base intermediate with DNA) is an active-site residue. Glu-3 acts as the Proton donor in catalysis. The active-site Proton donor; for beta-elimination activity is the Lys-60. Positions 93 and 112 each coordinate DNA. An FPG-type zinc finger spans residues 240-274 (NVYGKKGEPCVTCGTILEKTVVGGRGTHYCPICQP). Arg-264 (proton donor; for delta-elimination activity) is an active-site residue.

Belongs to the FPG family. As to quaternary structure, monomer. Zn(2+) serves as cofactor.

It carries out the reaction Hydrolysis of DNA containing ring-opened 7-methylguanine residues, releasing 2,6-diamino-4-hydroxy-5-(N-methyl)formamidopyrimidine.. It catalyses the reaction 2'-deoxyribonucleotide-(2'-deoxyribose 5'-phosphate)-2'-deoxyribonucleotide-DNA = a 3'-end 2'-deoxyribonucleotide-(2,3-dehydro-2,3-deoxyribose 5'-phosphate)-DNA + a 5'-end 5'-phospho-2'-deoxyribonucleoside-DNA + H(+). In terms of biological role, involved in base excision repair of DNA damaged by oxidation or by mutagenic agents. Acts as a DNA glycosylase that recognizes and removes damaged bases. Has a preference for oxidized purines, such as 7,8-dihydro-8-oxoguanine (8-oxoG). Has AP (apurinic/apyrimidinic) lyase activity and introduces nicks in the DNA strand. Cleaves the DNA backbone by beta-delta elimination to generate a single-strand break at the site of the removed base with both 3'- and 5'-phosphates. This Bacillus anthracis protein is Formamidopyrimidine-DNA glycosylase.